A 113-amino-acid chain; its full sequence is Endoribonuclease SymE (113 aa).

The 46-residue stretch at 29–74 folds into the SpoVT-AbrB domain; it reads SRYPDYSRIPAITLKGQWLEAAGFATGTVVDVKVMEGCIVLTAQPP.

It belongs to the SymE family.

The protein resides in the cytoplasm. Its function is as follows. Involved in the degradation and recycling of damaged RNA. It is itself a target for degradation by the ATP-dependent protease Lon. This chain is Endoribonuclease SymE, found in Escherichia coli (strain 55989 / EAEC).